Consider the following 871-residue polypeptide: Alanine--tRNA ligase (871 aa).

Positions 561, 565, 665, and 669 each coordinate Zn(2+).

This sequence belongs to the class-II aminoacyl-tRNA synthetase family. The cofactor is Zn(2+).

It localises to the cytoplasm. It carries out the reaction tRNA(Ala) + L-alanine + ATP = L-alanyl-tRNA(Ala) + AMP + diphosphate. Catalyzes the attachment of alanine to tRNA(Ala) in a two-step reaction: alanine is first activated by ATP to form Ala-AMP and then transferred to the acceptor end of tRNA(Ala). Also edits incorrectly charged Ser-tRNA(Ala) and Gly-tRNA(Ala) via its editing domain. This is Alanine--tRNA ligase from Dehalococcoides mccartyi (strain CBDB1).